A 1377-amino-acid chain; its full sequence is DNA-directed RNA polymerase subunit beta'' (1377 aa).

Cysteine 220, cysteine 291, cysteine 298, and cysteine 301 together coordinate Zn(2+).

Belongs to the RNA polymerase beta' chain family. RpoC2 subfamily. In terms of assembly, in plastids the minimal PEP RNA polymerase catalytic core is composed of four subunits: alpha, beta, beta', and beta''. When a (nuclear-encoded) sigma factor is associated with the core the holoenzyme is formed, which can initiate transcription. It depends on Zn(2+) as a cofactor.

It is found in the plastid. Its subcellular location is the chloroplast. The catalysed reaction is RNA(n) + a ribonucleoside 5'-triphosphate = RNA(n+1) + diphosphate. In terms of biological role, DNA-dependent RNA polymerase catalyzes the transcription of DNA into RNA using the four ribonucleoside triphosphates as substrates. This is DNA-directed RNA polymerase subunit beta'' from Nandina domestica (Heavenly bamboo).